We begin with the raw amino-acid sequence, 146 residues long: Leptin (146 aa).

Residues Cys-96 and Cys-146 are joined by a disulfide bond.

Belongs to the leptin family.

It localises to the secreted. Key player in the regulation of energy balance and body weight control. Once released into the circulation, has central and peripheral effects by binding LEPR, found in many tissues, which results in the activation of several major signaling pathways. In the hypothalamus, acts as an appetite-regulating factor that induces a decrease in food intake and an increase in energy consumption by inducing anorexinogenic factors and suppressing orexigenic neuropeptides, also regulates bone mass and secretion of hypothalamo-pituitary-adrenal hormones. In the periphery, increases basal metabolism, influences reproductive function, regulates pancreatic beta-cell function and insulin secretion, is pro-angiogenic for endothelial cell and affects innate and adaptive immunity. In the arcuate nucleus of the hypothalamus, activates by depolarization POMC neurons inducing FOS and SOCS3 expression to release anorexigenic peptides and inhibits by hyperpolarization NPY neurons inducing SOCS3 with a consequent reduction on release of orexigenic peptides. In addition to its known satiety inducing effect, has a modulatory role in nutrient absorption. In the intestine, reduces glucose absorption by enterocytes by activating PKC and leading to a sequential activation of p38, PI3K and ERK signaling pathways which exerts an inhibitory effect on glucose absorption. Acts as a growth factor on certain tissues, through the activation of different signaling pathways increases expression of genes involved in cell cycle regulation such as CCND1, via JAK2-STAT3 pathway, or VEGFA, via MAPK1/3 and PI3K-AKT1 pathways. May also play an apoptotic role via JAK2-STAT3 pathway and up-regulation of BIRC5 expression. Pro-angiogenic, has mitogenic activity on vascular endothelial cells and plays a role in matrix remodeling by regulating the expression of matrix metalloproteinases (MMPs) and tissue inhibitors of metalloproteinases (TIMPs). In innate immunity, modulates the activity and function of neutrophils by increasing chemotaxis and the secretion of oxygen radicals. Increases phagocytosis by macrophages and enhances secretion of pro-inflammatory mediators. Increases cytotoxic ability of NK cells. Plays a pro-inflammatory role, in synergy with IL1B, by inducing NOS2 which promotes the production of IL6, IL8 and Prostaglandin E2, through a signaling pathway that involves JAK2, PI3K, MAP2K1/MEK1 and MAPK14/p38. In adaptive immunity, promotes the switch of memory T-cells towards T helper-1 cell immune responses. Increases CD4(+)CD25(-) T-cell proliferation and reduces autophagy during TCR (T-cell receptor) stimulation, through MTOR signaling pathway activation and BCL2 up-regulation. The protein is Leptin (LEP) of Pongo pygmaeus (Bornean orangutan).